The primary structure comprises 772 residues: Mitochondrial intermediate peptidase (772 aa).

Residues 1–33 constitute a mitochondrion transit peptide; it reads MLARPSTTVLARRPFFRFRGCLNEPRPTKARCL. His556 provides a ligand contact to Zn(2+). The active site involves Glu557. 2 residues coordinate Zn(2+): His560 and His563.

The protein belongs to the peptidase M3 family. Zn(2+) is required as a cofactor.

Its subcellular location is the mitochondrion matrix. The catalysed reaction is Release of an N-terminal octapeptide as second stage of processing of some proteins imported into the mitochondrion.. Functionally, cleaves proteins, imported into the mitochondrion, to their mature size. While most mitochondrial precursor proteins are processed to the mature form in one step by mitochondrial processing peptidase (MPP), the sequential cleavage by MIP of an octapeptide after initial processing by MPP is a required step for a subgroup of nuclear-encoded precursor proteins destined for the matrix or the inner membrane. This is Mitochondrial intermediate peptidase (OCT1) from Coprinopsis scobicola (Ink cap fungus).